A 429-amino-acid polypeptide reads, in one-letter code: Enolase (429 aa).

(2R)-2-phosphoglycerate is bound at residue Q163. E205 serves as the catalytic Proton donor. The Mg(2+) site is built by D242, E286, and D313. K338, R367, S368, and K389 together coordinate (2R)-2-phosphoglycerate. K338 acts as the Proton acceptor in catalysis.

It belongs to the enolase family. The cofactor is Mg(2+).

The protein localises to the cytoplasm. It localises to the secreted. The protein resides in the cell surface. It carries out the reaction (2R)-2-phosphoglycerate = phosphoenolpyruvate + H2O. The protein operates within carbohydrate degradation; glycolysis; pyruvate from D-glyceraldehyde 3-phosphate: step 4/5. Its function is as follows. Catalyzes the reversible conversion of 2-phosphoglycerate (2-PG) into phosphoenolpyruvate (PEP). It is essential for the degradation of carbohydrates via glycolysis. The sequence is that of Enolase from Geotalea uraniireducens (strain Rf4) (Geobacter uraniireducens).